The chain runs to 968 residues: Pumilio homolog 1 (968 aa).

2 disordered regions span residues 1–25 and 138–171; these read MIPE…DYEK and NNVL…TGAS. The residue at position 194 (serine 194) is a Phosphoserine. 3 disordered regions span residues 204 to 240, 260 to 303, and 360 to 382; these read GHGH…SQGI, GTPD…VTSG, and KSDQ…PHGS. Polar residues-rich tracts occupy residues 211-220 and 227-238; these read QQPSRPASRN and DSNNNLSPSASQ. Threonine 261 is subject to Phosphothreonine. The span at 291-303 shows a compositional bias: polar residues; sequence TSNQSPFNGVTSG. Residues 610–950 enclose the PUM-HD domain; that stretch reads FGSSMLEEFK…HVVARIEKLV (341 aa). Pumilio repeat units follow at residues 630–665, 666–701, 702–737, 738–773, 774–810, 811–846, 847–882, and 883–924; these read EIAG…MVYE, EIMP…ELAE, KLFD…KMVK, ELDG…FIIS, TFFG…KVME, EILS…VIIK, ELAG…LLVN, and EMLG…LILT.

The protein resides in the cytoplasm. Its function is as follows. Sequence-specific RNA-binding protein that regulates translation and mRNA stability by binding the 3'-UTR of target mRNAs. Binds the APUM-binding elements (APBEs) in the 3'-UTR mRNA sequence of CLV1, PNH, WUS and FAS2. This chain is Pumilio homolog 1 (APUM1), found in Arabidopsis thaliana (Mouse-ear cress).